A 35-amino-acid chain; its full sequence is Defensin-B (35 aa).

Disulfide bonds link Cys4/Cys25, Cys10/Cys33, and Cys14/Cys35.

It is found in the secreted. In terms of biological role, has antibacterial activity against M.luteus and E.coli. This chain is Defensin-B, found in Mytilus edulis (Blue mussel).